A 71-amino-acid polypeptide reads, in one-letter code: MNRLLVFLMLGAAFMLVVSANDAYGDEPAFKDLNQGDESLGKRKSCCPCWLRGNCFWGQNCYPEGCSGPKV.

A signal peptide spans 1–20 (MNRLLVFLMLGAAFMLVVSA). The propeptide occupies 21 to 41 (NDAYGDEPAFKDLNQGDESLG). Intrachain disulfides connect Cys-46–Cys-61, Cys-47–Cys-55, and Cys-49–Cys-66.

The protein belongs to the sea anemone short toxin (type III) family.

It localises to the secreted. The protein localises to the nematocyst. Voltage-gated sodium channel (Nav) inhibitor. 1 uM completely inhibits insect voltage-gated sodium channel inactivation (DmNav1 from D.melanogaster). The polypeptide is Delta-actitoxin-Avd2b 2 (Anemonia viridis (Snakelocks anemone)).